The sequence spans 288 residues: G1/S-specific cyclin-D2 (288 aa).

The Cyclin N-terminal domain occupies 26–151 (LQNLLTIEER…VLGKLKWNLA (126 aa)). The segment at 264–288 (QHNGSKSVEDPDQATTPTDVRDVDL) is disordered. A Phosphoserine modification is found at serine 270. Threonine 279 bears the Phosphothreonine mark.

The protein belongs to the cyclin family. Cyclin D subfamily. As to quaternary structure, interacts with either CDK4 or CDK6 protein kinase to form a serine/threonine kinase holoenzyme complex. The cyclin subunit imparts substrate specificity to the complex. Post-translationally, phosphorylation at Thr-279 by MAP kinases is required for ubiquitination and degradation by the DCX(AMBRA1) complex. In terms of processing, ubiquitinated by the DCX(AMBRA1) complex during the transition from G1 to S cell phase, leading to its degradation: ubiquitination is dependent on Thr-279 phosphorylation. The DCX(AMBRA1) complex represents the major regulator of CCND2 stability during the G1/S transition. Polyubiquitinated by the SCF(FBXL2) complex, leading to proteasomal degradation.

It localises to the nucleus. It is found in the cytoplasm. The protein localises to the nucleus membrane. Its function is as follows. Regulatory component of the cyclin D2-CDK4 (DC) complex that phosphorylates and inhibits members of the retinoblastoma (RB) protein family including RB1 and regulates the cell-cycle during G(1)/S transition. Phosphorylation of RB1 allows dissociation of the transcription factor E2F from the RB/E2F complex and the subsequent transcription of E2F target genes which are responsible for the progression through the G(1) phase. Hypophosphorylates RB1 in early G(1) phase. Cyclin D-CDK4 complexes are major integrators of various mitogenenic and antimitogenic signals. In Rattus norvegicus (Rat), this protein is G1/S-specific cyclin-D2 (Ccnd2).